The chain runs to 213 residues: Anti-sigma-W factor RsiW (213 aa).

At 1 to 86 (MSCEQHYRTL…TNRFKVWMRR (86 aa)) the chain is on the cytoplasmic side. Zn(2+)-binding residues include His-30, Cys-34, and Cys-37. The helical transmembrane segment at 87–109 (YPLAVAAAVFVLLMSTSLFSMWS) threads the bilayer. Residues 110–213 (SDGEHVTVTG…ISDEKNSPSS (104 aa)) lie on the Extracellular side of the membrane.

It belongs to the zinc-associated anti-sigma factor (ZAS) superfamily. Anti-sigma-W factor family. It depends on Zn(2+) as a cofactor. In terms of processing, is processed by three successive proteolytic events. First, the extracellular region of RsiW is cleaved by PrsW (Site-1 cleavage) in response to cell envelope stresses. Next, it undergoes cleavage at an intramembrane site (Site-2 cleavage) mediated by RasP. This cleavage uncovers a cryptic proteolytic tag with conserved alanine residues in the transmembrane segment, that is recognized mainly by the ClpXP protease, which completely degrades the protein in the cytoplasm and leads to the induction of the sigma-W-controlled genes.

The protein localises to the membrane. Its function is as follows. Is the anti-sigma factor for SigW. The presence of RsiW leads to the inactivation of SigW, and its proteolytic destruction to sigma-W activation. The chain is Anti-sigma-W factor RsiW (rsiW) from Halalkalibacterium halodurans (strain ATCC BAA-125 / DSM 18197 / FERM 7344 / JCM 9153 / C-125) (Bacillus halodurans).